Reading from the N-terminus, the 496-residue chain is Putative (R)-citramalate synthase CimA (496 aa).

The Pyruvate carboxyltransferase domain occupies 3 to 253; sequence VRVLDTTLRD…DTSINIEMLY (251 aa).

Belongs to the alpha-IPM synthase/homocitrate synthase family. As to quaternary structure, homodimer.

It carries out the reaction pyruvate + acetyl-CoA + H2O = (3R)-citramalate + CoA + H(+). The protein operates within amino-acid biosynthesis; L-isoleucine biosynthesis; 2-oxobutanoate from pyruvate: step 1/3. Its function is as follows. Catalyzes the condensation of pyruvate and acetyl-coenzyme A to form (R)-citramalate. In Methanothermobacter thermautotrophicus (strain ATCC 29096 / DSM 1053 / JCM 10044 / NBRC 100330 / Delta H) (Methanobacterium thermoautotrophicum), this protein is Putative (R)-citramalate synthase CimA.